Consider the following 187-residue polypeptide: Transmembrane protein 11-A, mitochondrial (187 aa).

Helical transmembrane passes span 79-95 and 102-119; these read TAVLSGTACLLTPLALP and VSLPAGVLSLACSTLYGI.

It belongs to the TMEM11 family.

It is found in the mitochondrion inner membrane. Its function is as follows. Plays a role in mitochondrial morphogenesis. The sequence is that of Transmembrane protein 11-A, mitochondrial (tmem11-a) from Xenopus laevis (African clawed frog).